Reading from the N-terminus, the 286-residue chain is Cytochrome bo(3) ubiquinol oxidase subunit 2 (286 aa).

The N-terminal stretch at 1–24 (MQFIKYKSYILKFLLVSCIFCING) is a signal peptide. A lipid anchor (N-palmitoyl cysteine) is attached at Cys25. Cys25 carries S-diacylglycerol cysteine lipidation. The Extracellular portion of the chain corresponds to 25-44 (CDCTILCPNGLIAQEQRFVL). The helical transmembrane segment at 45–67 (FVSFFTMLLIIIPVIFMTIFFVL) threads the bilayer. Residues 68–85 (RYRESNFSKTYDPKWSHS) lie on the Cytoplasmic side of the membrane. The chain crosses the membrane as a helical span at residues 86-108 (NIIELLIWGIPIIIIVFLSIFSW). The Extracellular segment spans residues 109 to 286 (KSVHDLDPKK…VIANVLKISL (178 aa)).

Belongs to the cytochrome c oxidase subunit 2 family. As to quaternary structure, heterooctamer of two A chains, two B chains, two C chains and two D chains.

The protein localises to the cell membrane. Functionally, cytochrome bo(3) ubiquinol terminal oxidase is the component of the aerobic respiratory chain of E.coli that predominates when cells are grown at high aeration. Has proton pump activity across the membrane in addition to electron transfer, pumping 2 protons/electron. The chain is Cytochrome bo(3) ubiquinol oxidase subunit 2 (cyoA) from Buchnera aphidicola subsp. Baizongia pistaciae (strain Bp).